The chain runs to 674 residues: YAP1-binding protein 1 (674 aa).

This sequence belongs to the YBP1 family. As to quaternary structure, interacts with YAP1. Forms a peroxide stress induced complex with YAP1 in the cytoplasm. Systematic proteome-wide 2-hybrid interaction studies suggest that YAP1, HYR1/GPX3, and YBP1 all interact with the nuclear pore complex subunit NUP116, which is involved in nucleocytoplasmic transport.

The protein localises to the cytoplasm. Involved in oxidative stress response and redox homeostasis. Required for hydrogen peroxide-induced oxidation and nuclear localization (activation) of YAP1. Functions probably in concert with HYP1/GPX3, the actual YAP1 modifying enzyme. YBP1 is not required for HYP1/GPX3-independent, diamide-induced oxidation of YAP1. The chain is YAP1-binding protein 1 from Saccharomyces cerevisiae (strain ATCC 204508 / S288c) (Baker's yeast).